We begin with the raw amino-acid sequence, 28 residues long: Ribosome-inactivating protein pleuturegin (28 aa).

The protein belongs to the ribosome-inactivating protein family.

It carries out the reaction Endohydrolysis of the N-glycosidic bond at one specific adenosine on the 28S rRNA.. In terms of biological role, inhibits protein synthesis in animal cells. Does not possess ribonuclease activity. The sequence is that of Ribosome-inactivating protein pleuturegin from Pleurotus tuber-regium (King tuber oyster mushroom).